Consider the following 492-residue polypeptide: Probable glycine dehydrogenase (decarboxylating) subunit 2 (492 aa).

Lys-274 carries the post-translational modification N6-(pyridoxal phosphate)lysine.

This sequence belongs to the GcvP family. C-terminal subunit subfamily. The glycine cleavage system is composed of four proteins: P, T, L and H. In this organism, the P 'protein' is a heterodimer of two subunits. It depends on pyridoxal 5'-phosphate as a cofactor.

It carries out the reaction N(6)-[(R)-lipoyl]-L-lysyl-[glycine-cleavage complex H protein] + glycine + H(+) = N(6)-[(R)-S(8)-aminomethyldihydrolipoyl]-L-lysyl-[glycine-cleavage complex H protein] + CO2. In terms of biological role, the glycine cleavage system catalyzes the degradation of glycine. The P protein binds the alpha-amino group of glycine through its pyridoxal phosphate cofactor; CO(2) is released and the remaining methylamine moiety is then transferred to the lipoamide cofactor of the H protein. The chain is Probable glycine dehydrogenase (decarboxylating) subunit 2 from Exiguobacterium sibiricum (strain DSM 17290 / CCUG 55495 / CIP 109462 / JCM 13490 / 255-15).